We begin with the raw amino-acid sequence, 482 residues long: tRNA sulfurtransferase (482 aa).

Positions 61–165 (LAIRDALTRI…DDRLLLIKGR (105 aa)) constitute a THUMP domain. ATP contacts are provided by residues 183 to 184 (LI), Lys-265, Gly-287, and Gln-296. The cysteines at positions 344 and 456 are disulfide-linked. The region spanning 404–482 (FGPNDVILDI…GFNNVKVYRP (79 aa)) is the Rhodanese domain. Cys-456 serves as the catalytic Cysteine persulfide intermediate.

Belongs to the ThiI family.

The protein resides in the cytoplasm. The enzyme catalyses [ThiI sulfur-carrier protein]-S-sulfanyl-L-cysteine + a uridine in tRNA + 2 reduced [2Fe-2S]-[ferredoxin] + ATP + H(+) = [ThiI sulfur-carrier protein]-L-cysteine + a 4-thiouridine in tRNA + 2 oxidized [2Fe-2S]-[ferredoxin] + AMP + diphosphate. It catalyses the reaction [ThiS sulfur-carrier protein]-C-terminal Gly-Gly-AMP + S-sulfanyl-L-cysteinyl-[cysteine desulfurase] + AH2 = [ThiS sulfur-carrier protein]-C-terminal-Gly-aminoethanethioate + L-cysteinyl-[cysteine desulfurase] + A + AMP + 2 H(+). It functions in the pathway cofactor biosynthesis; thiamine diphosphate biosynthesis. In terms of biological role, catalyzes the ATP-dependent transfer of a sulfur to tRNA to produce 4-thiouridine in position 8 of tRNAs, which functions as a near-UV photosensor. Also catalyzes the transfer of sulfur to the sulfur carrier protein ThiS, forming ThiS-thiocarboxylate. This is a step in the synthesis of thiazole, in the thiamine biosynthesis pathway. The sulfur is donated as persulfide by IscS. This Escherichia coli O45:K1 (strain S88 / ExPEC) protein is tRNA sulfurtransferase.